A 162-amino-acid chain; its full sequence is Serine-protein kinase RsbW (162 aa).

The protein belongs to the anti-sigma-factor family.

The enzyme catalyses L-seryl-[protein] + ATP = O-phospho-L-seryl-[protein] + ADP + H(+). It catalyses the reaction L-threonyl-[protein] + ATP = O-phospho-L-threonyl-[protein] + ADP + H(+). Negative regulator of sigma-B activity. Phosphorylates and inactivates its specific antagonist protein, RsbV. Upon phosphorylation of RsbV, RsbW is released and binds to sigma-B, thereby blocking its ability to form an RNA polymerase holoenzyme (E-sigma-B). This is Serine-protein kinase RsbW from Bacillus pumilus (strain SAFR-032).